The primary structure comprises 437 residues: Phosphoribosylamine--glycine ligase (437 aa).

The ATP-grasp domain occupies 109–316; that stretch reads KDFLARHGIP…LLDLIEAALN (208 aa). 135–196 contributes to the ATP binding site; sequence VRQQGAPIVI…EEYLDGEEAS (62 aa). 2 residues coordinate Mg(2+): Glu-286 and Asn-288.

The protein belongs to the GARS family. Requires Mg(2+) as cofactor. The cofactor is Mn(2+).

The enzyme catalyses 5-phospho-beta-D-ribosylamine + glycine + ATP = N(1)-(5-phospho-beta-D-ribosyl)glycinamide + ADP + phosphate + H(+). Its pathway is purine metabolism; IMP biosynthesis via de novo pathway; N(1)-(5-phospho-D-ribosyl)glycinamide from 5-phospho-alpha-D-ribose 1-diphosphate: step 2/2. The chain is Phosphoribosylamine--glycine ligase from Xylella fastidiosa (strain 9a5c).